The chain runs to 165 residues: Ubiquitin-like protein ISG15 (165 aa).

Ubiquitin-like domains lie at glycine 2–cysteine 78 and aspartate 79–glycine 157. Position 78 is an S-nitrosocysteine; alternate (cysteine 78). An LRLRGG motif is present at residues leucine 152–glycine 157. The interval arginine 153–glycine 157 is involved in the ligation of specific target proteins. Glycine 157 is covalently cross-linked (Glycyl lysine isopeptide (Gly-Lys) (interchain with K-? in acceptor proteins)). A propeptide spans glycine 158 to serine 165 (removed in mature form).

As to quaternary structure, homodimer; disulfide-linked. Interacts with, and is conjugated to its targets by UBE1L (E1 enzyme) and UBE2E2 (E2 enzyme). Interacts with NEDD4. Interacts with PARP12; this interaction inhibits PINK1/Parkin-dependent mitophagy. (Microbial infection) Interacts with vaccinia virus protein E3. In terms of assembly, (Microbial infection) Interaction with influenza B NS1 protein inhibits its conjugation. As to quaternary structure, (Microbial infection) Interacts (via C-terminus) with Crimean-Congo hemorrhagic fever virus (CCHFV) RNA-directed RNA polymerase L (via N-terminus); the deISGylase activity of the viral protein interferes with antiviral signaling pathways mediated by NF-kappaB and IRF signalings. (Microbial infection) Interacts with human cytomegalovirus protein UL26; this interaction inhibits global protein ISGylation. In terms of processing, S-nitrosylation decreases its dimerization, thereby increasing the availability as well as the solubility of monomeric ISG15 for its conjugation to cellular proteins. Post-translationally, induced as an inactive, precursor protein that is cleaved by specific proteases to expose the C-terminal diglycine (LRLRGG) motif. This motif is essential not only for its conjugation to substrates but also for its recognition by the relevant processing proteases. In terms of tissue distribution, detected in lymphoid cells, striated and smooth muscle, several epithelia and neurons. Expressed in neutrophils, monocytes and lymphocytes. Enhanced expression seen in pancreatic adenocarcinoma, endometrial cancer, and bladder cancer, as compared to non-cancerous tissue. In bladder cancer, the increase in expression exhibits a striking positive correlation with more advanced stages of the disease.

It is found in the cytoplasm. Its subcellular location is the secreted. Its function is as follows. Ubiquitin-like protein which plays a key role in the innate immune response to viral infection either via its conjugation to a target protein (ISGylation) or via its action as a free or unconjugated protein. ISGylation involves a cascade of enzymatic reactions involving E1, E2, and E3 enzymes which catalyze the conjugation of ISG15 to a lysine residue in the target protein. Its target proteins include IFIT1, MX1/MxA, PPM1B, UBE2L6, UBA7, CHMP5, CHMP2A, CHMP4B and CHMP6. Isgylation of the viral sensor IFIH1/MDA5 promotes IFIH1/MDA5 oligomerization and triggers activation of innate immunity against a range of viruses, including coronaviruses, flaviviruses and picornaviruses. Can also isgylate: EIF2AK2/PKR which results in its activation, RIGI which inhibits its function in antiviral signaling response, EIF4E2 which enhances its cap structure-binding activity and translation-inhibition activity, UBE2N and UBE2E1 which negatively regulates their activity, IRF3 which inhibits its ubiquitination and degradation and FLNB which prevents its ability to interact with the upstream activators of the JNK cascade thereby inhibiting IFNA-induced JNK signaling. Exhibits antiviral activity towards both DNA and RNA viruses, including influenza A, HIV-1 and Ebola virus. Restricts HIV-1 and ebola virus via disruption of viral budding. Inhibits the ubiquitination of HIV-1 Gag and host TSG101 and disrupts their interaction, thereby preventing assembly and release of virions from infected cells. Inhibits Ebola virus budding mediated by the VP40 protein by disrupting ubiquitin ligase activity of NEDD4 and its ability to ubiquitinate VP40. ISGylates influenza A virus NS1 protein which causes a loss of function of the protein and the inhibition of virus replication. The secreted form of ISG15 can: induce natural killer cell proliferation, act as a chemotactic factor for neutrophils and act as a IFN-gamma-inducing cytokine playing an essential role in antimycobacterial immunity. The secreted form acts through the integrin ITGAL/ITGB2 receptor to initiate activation of SRC family tyrosine kinases including LYN, HCK and FGR which leads to secretion of IFNG and IL10; the interaction is mediated by ITGAL. In Homo sapiens (Human), this protein is Ubiquitin-like protein ISG15.